The following is a 253-amino-acid chain: Phosphoglycerate mutase 2 (253 aa).

Residue Thr-3 is modified to Phosphothreonine. Substrate-binding positions include 10–17 (RHGESTWN), 23–24 (CG), Arg-62, 89–92 (ERHY), Lys-100, and 116–117 (RR). Catalysis depends on His-11, which acts as the Tele-phosphohistidine intermediate. Phosphoserine is present on Ser-14. The active-site Proton donor/acceptor is Glu-89. Ser-118 carries the post-translational modification Phosphoserine. Tyr-132 and Tyr-133 each carry phosphotyrosine. Phosphoserine is present on Ser-135. Thr-152 bears the Phosphothreonine mark. 187–188 (GN) provides a ligand contact to substrate.

Belongs to the phosphoglycerate mutase family. BPG-dependent PGAM subfamily. Homodimer. Interacts with ENO1. In terms of tissue distribution, expressed in the heart and muscle. Not found in the liver and brain.

The enzyme catalyses (2R)-2-phosphoglycerate = (2R)-3-phosphoglycerate. It catalyses the reaction (2R)-3-phospho-glyceroyl phosphate = (2R)-2,3-bisphosphoglycerate + H(+). Interconversion of 3- and 2-phosphoglycerate with 2,3-bisphosphoglycerate as the primer of the reaction. Can also catalyze the reaction of EC 5.4.2.4 (synthase), but with a reduced activity. This Homo sapiens (Human) protein is Phosphoglycerate mutase 2 (PGAM2).